The primary structure comprises 363 residues: Actin-related protein 7 (363 aa).

Met-1 carries the N-acetylmethionine modification.

Belongs to the actin family. Plant ARP7 subfamily. In terms of tissue distribution, mostly expressed in flowers, and, to a lower extent, in roots, seedlings, leaves and siliques (at protein level).

It is found in the nucleus. The protein resides in the cytoplasm. Essential protein required during embryogenesis and all plant development stages, probably through a chromatin-mediated regulation of gene expression. The sequence is that of Actin-related protein 7 (ARP7) from Arabidopsis thaliana (Mouse-ear cress).